Here is a 447-residue protein sequence, read N- to C-terminus: Protein chibby homolog 2 (447 aa).

Phosphoserine occurs at positions 41, 85, 88, 96, 123, 143, 147, and 149. A coiled-coil region spans residues 164–197 (EYLLQEENKSLRDENRALRDENKALRKENKILQV). Disordered stretches follow at residues 208-244 (HEESQTSSPLLHKDTTSQEVVKKDNATLPAQRSKENT) and 266-320 (WAQA…EDSK). S211 and S224 each carry phosphoserine. Residues 218 to 232 (LHKDTTSQEVVKKDN) show a composition bias toward basic and acidic residues. The stretch at 237–264 (AQRSKENTLQFIREENRALQQLLEQRQA) forms a coiled coil. Low complexity predominate over residues 266-276 (WAQAEESATSA). S272 and S275 each carry phosphoserine. Basic and acidic residues predominate over residues 277 to 290 (EEGKPTSSPKEEPH). 2 positions are modified to phosphoserine: S333 and S336. The stretch at 354-412 (LQLLREMNQALQALREENRLLQEENRALHAMREEHRVFQEENKALWENNKLKLQQRLVI) forms a coiled coil.

Belongs to the chibby family. SPERT subfamily. Homodimer. Binds to NEK1.

The protein is Protein chibby homolog 2 (Cby2) of Rattus norvegicus (Rat).